Reading from the N-terminus, the 152-residue chain is UPF0260 protein BAB1_1496 (152 aa).

This sequence belongs to the UPF0260 family.

This is UPF0260 protein BAB1_1496 from Brucella abortus (strain 2308).